Consider the following 378-residue polypeptide: Erythronate-4-phosphate dehydrogenase (378 aa).

Residues Ser-45 and Thr-66 each contribute to the substrate site. Residues Asp-146 and Thr-175 each coordinate NAD(+). Arg-208 is a catalytic residue. Asp-232 is a binding site for NAD(+). Residue Glu-237 is part of the active site. The Proton donor role is filled by His-254. Gly-257 is an NAD(+) binding site. Tyr-258 serves as a coordination point for substrate.

Belongs to the D-isomer specific 2-hydroxyacid dehydrogenase family. PdxB subfamily. In terms of assembly, homodimer.

It is found in the cytoplasm. The enzyme catalyses 4-phospho-D-erythronate + NAD(+) = (R)-3-hydroxy-2-oxo-4-phosphooxybutanoate + NADH + H(+). Its pathway is cofactor biosynthesis; pyridoxine 5'-phosphate biosynthesis; pyridoxine 5'-phosphate from D-erythrose 4-phosphate: step 2/5. Functionally, catalyzes the oxidation of erythronate-4-phosphate to 3-hydroxy-2-oxo-4-phosphonooxybutanoate. This is Erythronate-4-phosphate dehydrogenase from Shigella boydii serotype 4 (strain Sb227).